A 152-amino-acid polypeptide reads, in one-letter code: Large ribosomal subunit protein uL22 (152 aa).

Over residues 124-145 the composition is skewed to low complexity; it reads APKKAAAKKAAPAKETTPAATE. Residues 124-152 form a disordered region; that stretch reads APKKAAAKKAAPAKETTPAATESKTEGAE.

The protein belongs to the universal ribosomal protein uL22 family. Part of the 50S ribosomal subunit.

Functionally, this protein binds specifically to 23S rRNA; its binding is stimulated by other ribosomal proteins, e.g. L4, L17, and L20. It is important during the early stages of 50S assembly. It makes multiple contacts with different domains of the 23S rRNA in the assembled 50S subunit and ribosome. The globular domain of the protein is located near the polypeptide exit tunnel on the outside of the subunit, while an extended beta-hairpin is found that lines the wall of the exit tunnel in the center of the 70S ribosome. In Salinispora tropica (strain ATCC BAA-916 / DSM 44818 / JCM 13857 / NBRC 105044 / CNB-440), this protein is Large ribosomal subunit protein uL22.